The following is a 183-amino-acid chain: Inosine triphosphate pyrophosphatase (183 aa).

8-13 (TGNKNK) provides a ligand contact to ITP. Position 36 (E36) interacts with Mg(2+). Residues K48, 64-65 (DT), K81, 140-143 (FGWD), K161, and 166-167 (HR) contribute to the ITP site.

It belongs to the HAM1 NTPase family. Homodimer. It depends on Mg(2+) as a cofactor. The cofactor is Mn(2+).

The protein resides in the cytoplasm. It localises to the nucleus. It carries out the reaction ITP + H2O = IMP + diphosphate + H(+). It catalyses the reaction dITP + H2O = dIMP + diphosphate + H(+). The enzyme catalyses XTP + H2O = XMP + diphosphate + H(+). Its function is as follows. Pyrophosphatase that hydrolyzes non-canonical purine nucleotides such as inosine triphosphate (ITP), deoxyinosine triphosphate (dITP) or xanthosine 5'-triphosphate (XTP) to their respective monophosphate derivatives. The enzyme does not distinguish between the deoxy- and ribose forms. Probably excludes non-canonical purines from RNA and DNA precursor pools, thus preventing their incorporation into RNA and DNA and avoiding chromosomal lesions. In Ajellomyces capsulatus (strain G186AR / H82 / ATCC MYA-2454 / RMSCC 2432) (Darling's disease fungus), this protein is Inosine triphosphate pyrophosphatase.